Reading from the N-terminus, the 22-residue chain is uncharacterized protein (22 aa).

The disordered stretch occupies residues 1–22; it reads MHNSIAYDKDGNSTGQKYYAYG.

This is an uncharacterized protein from Lactobacillus helveticus (Lactobacillus suntoryeus).